The chain runs to 198 residues: ATP-dependent Clp protease proteolytic subunit 1 (198 aa).

Ser98 serves as the catalytic Nucleophile. His123 is an active-site residue.

It belongs to the peptidase S14 family. Fourteen ClpP subunits assemble into 2 heptameric rings which stack back to back to give a disk-like structure with a central cavity, resembling the structure of eukaryotic proteasomes.

The protein localises to the cytoplasm. It carries out the reaction Hydrolysis of proteins to small peptides in the presence of ATP and magnesium. alpha-casein is the usual test substrate. In the absence of ATP, only oligopeptides shorter than five residues are hydrolyzed (such as succinyl-Leu-Tyr-|-NHMec, and Leu-Tyr-Leu-|-Tyr-Trp, in which cleavage of the -Tyr-|-Leu- and -Tyr-|-Trp bonds also occurs).. Cleaves peptides in various proteins in a process that requires ATP hydrolysis. Has a chymotrypsin-like activity. Plays a major role in the degradation of misfolded proteins. ClpXP1 is involved in the complete degradation of the Site-2 clipped anti-sigma-W factor RsiW. This results in the release of SigW and the transcription activation of the genes under the control of the sigma-W factor. The protein is ATP-dependent Clp protease proteolytic subunit 1 of Bacillus licheniformis (strain ATCC 14580 / DSM 13 / JCM 2505 / CCUG 7422 / NBRC 12200 / NCIMB 9375 / NCTC 10341 / NRRL NRS-1264 / Gibson 46).